The following is a 2207-amino-acid chain: DNA polymerase epsilon catalytic subunit A (2207 aa).

Disordered stretches follow at residues 1–20 (MPSR…AASF), 1201–1233 (SMEK…PFAS), and 1934–1961 (RPES…ENEE). Cys-2075, Cys-2078, Cys-2113, and Cys-2116 together coordinate Zn(2+). A CysA-type zinc finger spans residues 2075 to 2116 (CSACCLIRDLDLCRDEDVLPERGSGSGPDSATSSRPWCCPFC). [4Fe-4S] cluster contacts are provided by Cys-2147, Cys-2150, Cys-2162, and Cys-2164. The CysB motif signature appears at 2147 to 2164 (CSKCGTLKISEFMEHCSC).

The protein belongs to the DNA polymerase type-B family. Heterotetramer. Consists of 4 subunits: pol2, dpb2, dpb3 and dpb4. The cofactor is [4Fe-4S] cluster.

Its subcellular location is the nucleus. It catalyses the reaction DNA(n) + a 2'-deoxyribonucleoside 5'-triphosphate = DNA(n+1) + diphosphate. Its function is as follows. DNA polymerase II participates in chromosomal DNA replication. In Emericella nidulans (strain FGSC A4 / ATCC 38163 / CBS 112.46 / NRRL 194 / M139) (Aspergillus nidulans), this protein is DNA polymerase epsilon catalytic subunit A (pol2).